Reading from the N-terminus, the 432-residue chain is GTPase Obg (432 aa).

The region spanning 1–158 (MFVDQVKIYV…RNIILELKLL (158 aa)) is the Obg domain. The OBG-type G domain occupies 159 to 329 (ADVGLVGFPS…LLFAIADLLE (171 aa)). Residues 165–172 (GFPSVGKS), 190–194 (FTTLV), 212–215 (DLPG), 282–285 (NKMD), and 310–312 (SAA) contribute to the GTP site. Residues Ser172 and Thr192 each contribute to the Mg(2+) site. Residues 350–428 (KYEKEEPPFT…LLDYEFEFVD (79 aa)) enclose the OCT domain.

It belongs to the TRAFAC class OBG-HflX-like GTPase superfamily. OBG GTPase family. Monomer. The cofactor is Mg(2+).

It is found in the cytoplasm. An essential GTPase which binds GTP, GDP and possibly (p)ppGpp with moderate affinity, with high nucleotide exchange rates and a fairly low GTP hydrolysis rate. Plays a role in control of the cell cycle, stress response, ribosome biogenesis and in those bacteria that undergo differentiation, in morphogenesis control. This Geobacillus kaustophilus (strain HTA426) protein is GTPase Obg.